Here is a 770-residue protein sequence, read N- to C-terminus: Nucleus-vacuole junction protein 2 (770 aa).

At 1-5 (MASLK) the chain is on the cytoplasmic side. The chain crosses the membrane as a helical; Signal-anchor for type II membrane protein span at residues 6–26 (VFLAVYLLGGITFLPLVLFTL). The Lumenal portion of the chain corresponds to 27–770 (YKIHLLYSNL…EFEEQREPKL (744 aa)). The PH domain maps to 114–266 (TALQEQILQR…WYYQLINASK (153 aa)). Residues asparagine 228, asparagine 263, asparagine 279, asparagine 300, asparagine 391, asparagine 528, and asparagine 529 are each glycosylated (N-linked (GlcNAc...) asparagine). The 201-residue stretch at 304 to 504 (NQLTTKWLNA…YPTPNEVYRG (201 aa)) folds into the SMP-LTD domain. Disordered regions lie at residues 541–566 (EGGM…LKDL), 578–600 (TQTT…TKSR), and 615–770 (KDNV…EPKL). Residues 554–566 (LRPERKKENLKDL) are compositionally biased toward basic and acidic residues. Residues 587–596 (NDDVSSSENS) show a composition bias toward polar residues. N-linked (GlcNAc...) asparagine glycosylation is found at asparagine 595 and asparagine 620. Phosphoserine is present on residues serine 640 and serine 669. Positions 679–688 (LEGRKEKDTE) are enriched in basic and acidic residues. N-linked (GlcNAc...) asparagine glycosylation occurs at asparagine 700. 2 stretches are compositionally biased toward polar residues: residues 713-725 (FSVS…NSLK) and 736-751 (LESS…QNRF). Serine 717 bears the Phosphoserine mark. Asparagine 718 carries an N-linked (GlcNAc...) asparagine glycan. Residues serine 720 and serine 723 each carry the phosphoserine modification. The span at 756-770 (FKQDLEFEEQREPKL) shows a compositional bias: basic and acidic residues.

It localises to the endoplasmic reticulum membrane. The protein resides in the nucleus membrane. Its function is as follows. During endoplasmic reticulum (ER) stress or when cellular ceramide levels increase, induces contacts between the ER and medial-Golgi complex to facilitate non-vesicular transport of ceramides from the ER to the Golgi complex where they are converted to complex sphingolipids, preventing toxic ceramide accumulation. The sequence is that of Nucleus-vacuole junction protein 2 from Saccharomyces cerevisiae (strain ATCC 204508 / S288c) (Baker's yeast).